The primary structure comprises 158 residues: Small ribosomal subunit protein uS7 (158 aa).

Belongs to the universal ribosomal protein uS7 family. In terms of assembly, part of the 30S ribosomal subunit. Contacts proteins S9 and S11.

In terms of biological role, one of the primary rRNA binding proteins, it binds directly to 16S rRNA where it nucleates assembly of the head domain of the 30S subunit. Is located at the subunit interface close to the decoding center, probably blocks exit of the E-site tRNA. The sequence is that of Small ribosomal subunit protein uS7 from Gluconobacter oxydans (strain 621H) (Gluconobacter suboxydans).